Consider the following 234-residue polypeptide: ATP synthase subunit a 2 (234 aa).

The next 6 membrane-spanning stretches (helical) occupy residues 29-49 (FFQH…VGLL), 90-110 (LIAT…IPGF), 116-136 (SLNT…IVGV), 147-167 (FMGP…IGHL), 186-206 (IVLM…MMLM), and 207-227 (GILV…IYIA).

The protein belongs to the ATPase A chain family. As to quaternary structure, F-type ATPases have 2 components, CF(1) - the catalytic core - and CF(0) - the membrane proton channel. CF(1) has five subunits: alpha(3), beta(3), gamma(1), delta(1), epsilon(1). CF(0) has three main subunits: a(1), b(2) and c(9-12). The alpha and beta chains form an alternating ring which encloses part of the gamma chain. CF(1) is attached to CF(0) by a central stalk formed by the gamma and epsilon chains, while a peripheral stalk is formed by the delta and b chains.

It localises to the cell inner membrane. Its function is as follows. Key component of the proton channel; it plays a direct role in the translocation of protons across the membrane. This Syntrophotalea carbinolica (strain DSM 2380 / NBRC 103641 / GraBd1) (Pelobacter carbinolicus) protein is ATP synthase subunit a 2.